A 570-amino-acid polypeptide reads, in one-letter code: Hemagglutinin-neuraminidase (570 aa).

Residues 1–26 (MNRAVCQVALENDEREAKNTWRLVFR) lie on the Intravirion side of the membrane. The chain crosses the membrane as a helical span at residues 27 to 48 (IAILLLTVMTLAISAAALAYSM). The Virion surface segment spans residues 49 to 570 (EASTPGDLVS…LVEILKDDGV (522 aa)). A glycan (N-linked (GlcNAc...) asparagine; by host) is linked at Asn119. An important for interaction with fusion/F protein region spans residues 124 to 152 (GAPVHDPDYIGGIGKELIVDDTSDVTSFY). Intrachain disulfides connect Cys172–Cys195, Cys185–Cys246, and Cys237–Cys250. Residues 233-238 (NRKSCS) are involved in neuraminidase activity. N-linked (GlcNAc...) asparagine; by host glycans are attached at residues Asn340 and Asn432. Cystine bridges form between Cys343-Cys460 and Cys454-Cys464. N-linked (GlcNAc...) asparagine; by host glycosylation is found at Asn480, Asn507, and Asn537. An intrachain disulfide couples Cys530 to Cys541.

This sequence belongs to the paramyxoviruses hemagglutinin-neuraminidase family. Homotetramer; composed of disulfide-linked homodimers. Interacts with F protein trimer. Interacts with host CG-1B; this interaction inhibits viral adsorption and replication rather than internalization.

The protein resides in the virion membrane. It localises to the host cell membrane. It carries out the reaction Hydrolysis of alpha-(2-&gt;3)-, alpha-(2-&gt;6)-, alpha-(2-&gt;8)- glycosidic linkages of terminal sialic acid residues in oligosaccharides, glycoproteins, glycolipids, colominic acid and synthetic substrates.. Functionally, mediates the viral entry into the host cell together with fusion/F protein. Attaches the virus to sialic acid-containing cell receptors and thereby initiates infection. Binding of HN protein to the receptor induces a conformational change that allows the F protein to trigger virion/cell membranes fusion. Its function is as follows. Neuraminidase activity ensures the efficient spread of the virus by dissociating the mature virions from the neuraminic acid containing glycoproteins. The protein is Hemagglutinin-neuraminidase (HN) of Gallus gallus (Chicken).